A 40-amino-acid chain; its full sequence is Photosystem II reaction center protein J (40 aa).

A helical membrane pass occupies residues 8–28; that stretch reads IPLWLIGTVAGILVLGLLGIF.

It belongs to the PsbJ family. As to quaternary structure, PSII is composed of 1 copy each of membrane proteins PsbA, PsbB, PsbC, PsbD, PsbE, PsbF, PsbH, PsbI, PsbJ, PsbK, PsbL, PsbM, PsbT, PsbX, PsbY, PsbZ, Psb30/Ycf12, at least 3 peripheral proteins of the oxygen-evolving complex and a large number of cofactors. It forms dimeric complexes.

The protein resides in the plastid. It is found in the chloroplast thylakoid membrane. Functionally, one of the components of the core complex of photosystem II (PSII). PSII is a light-driven water:plastoquinone oxidoreductase that uses light energy to abstract electrons from H(2)O, generating O(2) and a proton gradient subsequently used for ATP formation. It consists of a core antenna complex that captures photons, and an electron transfer chain that converts photonic excitation into a charge separation. The sequence is that of Photosystem II reaction center protein J from Physcomitrium patens (Spreading-leaved earth moss).